We begin with the raw amino-acid sequence, 848 residues long: Protein MEI2-like 2 (848 aa).

RRM domains lie at 197–270 (RTLF…FSIP) and 282–355 (GTLV…PSRP). Disordered stretches follow at residues 370 to 400 (IDQD…QYSS), 455 to 523 (NQPH…SQGQ), and 826 to 848 (ATGD…GEEL).

In terms of biological role, probable RNA-binding protein that may play a role in growth regulation. The sequence is that of Protein MEI2-like 2 (ML2) from Oryza sativa subsp. japonica (Rice).